A 132-amino-acid chain; its full sequence is ATP synthase epsilon chain (132 aa).

Belongs to the ATPase epsilon chain family. As to quaternary structure, F-type ATPases have 2 components, CF(1) - the catalytic core - and CF(0) - the membrane proton channel. CF(1) has five subunits: alpha(3), beta(3), gamma(1), delta(1), epsilon(1). CF(0) has three main subunits: a, b and c.

Its subcellular location is the cell membrane. Functionally, produces ATP from ADP in the presence of a proton gradient across the membrane. In Desulfitobacterium hafniense (strain DSM 10664 / DCB-2), this protein is ATP synthase epsilon chain.